Reading from the N-terminus, the 346-residue chain is MRVAVDAMGGDNAPGVEVEGAVAAAREFGIAITLVGDTEKVNCELAKHNCKDLDITVKHASEVVGMHDSASDAVRKKKDSSIRIAFELVKNNEADAVVSAGNSGATMAAGMFVLKRIKGIDRPAIAQIFPTLRGKTLVLDVGGNVDCKPLNLVQFAIMGEVYARSVMDVENPKIGVLSNGEEESKGNDLTRESSTLLKSTSLDYMGYVEGRDIFNGMVDVVVCDGFVGNVVLKLSEGLAEAVSTMLKEEIKQSLLYKIGYILSRRAFINFKKKVDYTEYGGAPLLGIDGVGMICHGGSNAKAIKNAIRFAHEYARKGVNQHMVEKLQENYPLYMQQLETLKAQAAG.

The protein belongs to the PlsX family. In terms of assembly, homodimer. Probably interacts with PlsY.

The protein resides in the cytoplasm. It catalyses the reaction a fatty acyl-[ACP] + phosphate = an acyl phosphate + holo-[ACP]. The protein operates within lipid metabolism; phospholipid metabolism. Functionally, catalyzes the reversible formation of acyl-phosphate (acyl-PO(4)) from acyl-[acyl-carrier-protein] (acyl-ACP). This enzyme utilizes acyl-ACP as fatty acyl donor, but not acyl-CoA. This is Phosphate acyltransferase from Geotalea daltonii (strain DSM 22248 / JCM 15807 / FRC-32) (Geobacter daltonii).